A 422-amino-acid polypeptide reads, in one-letter code: Validoxylamine A glucosyltransferase (422 aa).

Belongs to the glycosyltransferase 2 family. Requires Mn(2+) as cofactor.

It catalyses the reaction validoxylamine A + UDP-alpha-D-glucose = validamycin A + UDP + H(+). Involved in the biosynthesis of the antifungal agent validamycin A. Catalyzes the final attachment of glucose from UDP-alpha-D-glucose to validoxylamine A to yield validamycin A. UDP-glucose is the most efficient glycosyl donor, whereas GDP-glucose and ADP-glucose are much less efficient. ValG also utilizes UDP-galactose as substrate to produce the new validamycin analog, 4''-epi-validamycin A. The protein is Validoxylamine A glucosyltransferase of Streptomyces hygroscopicus subsp. jinggangensis (strain 5008).